Reading from the N-terminus, the 449-residue chain is Phosphoglucosamine mutase (449 aa).

Catalysis depends on S101, which acts as the Phosphoserine intermediate. Mg(2+) is bound by residues S101, D242, D244, and D246. Residue S101 is modified to Phosphoserine.

It belongs to the phosphohexose mutase family. It depends on Mg(2+) as a cofactor. Post-translationally, activated by phosphorylation.

It carries out the reaction alpha-D-glucosamine 1-phosphate = D-glucosamine 6-phosphate. Catalyzes the conversion of glucosamine-6-phosphate to glucosamine-1-phosphate. The chain is Phosphoglucosamine mutase from Methylocella silvestris (strain DSM 15510 / CIP 108128 / LMG 27833 / NCIMB 13906 / BL2).